Here is a 1334-residue protein sequence, read N- to C-terminus: Nck-associated protein 5-like (1334 aa).

Disordered regions lie at residues 1–28 (MSEAMDQPAGGPGNPRPGEGDDGSMEPG), 115–146 (LPQIPLTPLQPPSEPPASPSLSSTEGPAAPLP), 210–234 (TPWRPPGQGPGSPEPINGELCGPPQ), 266–316 (GEED…SPDT), and 349–711 (PLNG…MVPS). Residues 1 to 139 (MSEAMDQPAG…PASPSLSSTE (139 aa)) are mediates interaction with CDK5RAP2 and is required for homodimerization and microtubule bundle formation. Positions 28-106 (GTCQELLHRL…NQMLSALFQQ (79 aa)) form a coiled coil. Residues 122–132 (PLQPPSEPPAS) show a composition bias toward pro residues. Positions 358–372 (GQSSSPDQAPPQLSK) are enriched in polar residues. Phosphoserine; by CDK1 occurs at positions 440, 451, 470, and 477. The segment covering 468 to 481 (SPSPGGPQLSPQLP) has biased composition (low complexity). The (S/T)X(I/L)P motif 1 motif lies at 484–487 (SRIP). Phosphoserine occurs at positions 493, 496, and 498. Positions 519–547 (LPTSPSPCYTTPDSTQLRPPQSALSTTLS) are enriched in polar residues. Residues S571 and S577 each carry the phosphoserine; by CDK1 modification. Positions 638 to 649 (PGNSSKKPSQGS) are enriched in polar residues. Residue T659 is modified to Phosphothreonine. The interval 750–1146 (RVYSSHSMGA…SGTPSKNLPK (397 aa)) is mediates interaction with beta-tubulin and is required for microtubule bundle formation. S767 is subject to Phosphoserine; by CDK1. The segment at 782–884 (LAGALCPQVP…EGLAPHSAIE (103 aa)) is disordered. Low complexity predominate over residues 810–825 (SPHSSPTKLPSKSPTK). Residues 816–819 (TKLP) carry the (S/T)X(I/L)P motif 2 motif. Positions 926-929 (SKLP) match the (S/T)X(I/L)P motif 3; required for interaction with MAPRE1 motif. 3 disordered regions span residues 931-953 (LNRRTEATKNKEGAGGGSPLRRE), 986-1015 (KAYLSSRARPRPGGPAPGPNTGLGQVQGQL), and 1030-1183 (LNRV…VPGI). Basic and acidic residues predominate over residues 933–942 (RRTEATKNKE). Residues 956-994 (MEARKLEAESLNISKLMAKAEDLRRALEEEKAYLSSRAR) adopt a coiled-coil conformation. Over residues 1033-1050 (VDGKELPSKSWREPKPEY) the composition is skewed to basic and acidic residues. Positions 1079–1090 (GCGKPPGKPSSE) are enriched in low complexity. The span at 1110–1122 (SHFTACGSLTRTL) shows a compositional bias: polar residues. A compositionally biased stretch (pro residues) spans 1152-1167 (LDPPPGVPPARPPPLT). Phosphoserine is present on S1194. Over residues 1197–1206 (AFPALLPAAP) the composition is skewed to low complexity. The tract at residues 1197 to 1334 (AFPALLPAAP…DSLSSCGSQG (138 aa)) is disordered. Over residues 1235–1247 (TFPNTRAAGSSSD) the composition is skewed to polar residues. A compositionally biased stretch (low complexity) spans 1313–1334 (LETSESLSDSLYDSLSSCGSQG).

In terms of assembly, homodimer. Interacts with CDK5RAP2. Interacts with MAPRE1. Interacts with beta-tubulin. CDK1/Cyclin B-dependent phosphorylation mediates its dissociation from centrosomes during mitosis.

Its subcellular location is the cytoplasm. The protein resides in the cytoskeleton. It localises to the microtubule organizing center. It is found in the centrosome. Its function is as follows. Regulates microtubule organization and stabilization. Promotes microtubule growth and bundling formation and stabilizes microtubules by increasing intense acetylation of microtubules. Both tubulin-binding and homodimer formation are required for NCKAP5L-mediated microtubule bundle formation. The sequence is that of Nck-associated protein 5-like from Homo sapiens (Human).